The following is a 214-amino-acid chain: Adenylate kinase (214 aa).

10–15 (GAGKGT) serves as a coordination point for ATP. Residues 30–59 (STGDMLRAAVKAGTPLGLEAKKVMDAGQLV) are NMP. Residues threonine 31, arginine 36, 57–59 (QLV), 85–88 (GFPR), and glutamine 92 each bind AMP. The LID stretch occupies residues 122–159 (GRRVHPGSGRVYHIVFNQPKVEGKDDVTGEDLAIRPDD). ATP is bound by residues arginine 123 and 132–133 (VY). AMP contacts are provided by arginine 156 and arginine 167. Glutamine 200 is a binding site for ATP.

Belongs to the adenylate kinase family. In terms of assembly, monomer.

The protein localises to the cytoplasm. It catalyses the reaction AMP + ATP = 2 ADP. The protein operates within purine metabolism; AMP biosynthesis via salvage pathway; AMP from ADP: step 1/1. Catalyzes the reversible transfer of the terminal phosphate group between ATP and AMP. Plays an important role in cellular energy homeostasis and in adenine nucleotide metabolism. The sequence is that of Adenylate kinase from Shewanella piezotolerans (strain WP3 / JCM 13877).